The sequence spans 264 residues: Small ribosomal subunit protein eS1 (264 aa).

The tract at residues 233-264 (GEGGGAGKPAGDETGAKVERADGYEPPVQESV) is disordered. A compositionally biased stretch (basic and acidic residues) spans 242 to 255 (AGDETGAKVERADG).

The protein belongs to the eukaryotic ribosomal protein eS1 family. Component of the small ribosomal subunit. Mature ribosomes consist of a small (40S) and a large (60S) subunit. The 40S subunit contains about 33 different proteins and 1 molecule of RNA (18S). The 60S subunit contains about 49 different proteins and 3 molecules of RNA (28S, 5.8S and 5S). Part of the small subunit (SSU) processome, composed of more than 70 proteins and the RNA chaperone small nucleolar RNA (snoRNA) U3.

The protein localises to the cytoplasm. It localises to the nucleus. It is found in the nucleolus. Its function is as follows. Component of the small ribosomal subunit. The ribosome is a large ribonucleoprotein complex responsible for the synthesis of proteins in the cell. Part of the small subunit (SSU) processome, first precursor of the small eukaryotic ribosomal subunit. During the assembly of the SSU processome in the nucleolus, many ribosome biogenesis factors, an RNA chaperone and ribosomal proteins associate with the nascent pre-rRNA and work in concert to generate RNA folding, modifications, rearrangements and cleavage as well as targeted degradation of pre-ribosomal RNA by the RNA exosome. May play a role during erythropoiesis. The polypeptide is Small ribosomal subunit protein eS1 (rps3a) (Xenopus tropicalis (Western clawed frog)).